A 356-amino-acid polypeptide reads, in one-letter code: S-adenosylmethionine:tRNA ribosyltransferase-isomerase (356 aa).

Belongs to the QueA family. In terms of assembly, monomer.

The protein localises to the cytoplasm. It catalyses the reaction 7-aminomethyl-7-carbaguanosine(34) in tRNA + S-adenosyl-L-methionine = epoxyqueuosine(34) in tRNA + adenine + L-methionine + 2 H(+). Its pathway is tRNA modification; tRNA-queuosine biosynthesis. Functionally, transfers and isomerizes the ribose moiety from AdoMet to the 7-aminomethyl group of 7-deazaguanine (preQ1-tRNA) to give epoxyqueuosine (oQ-tRNA). This is S-adenosylmethionine:tRNA ribosyltransferase-isomerase from Cronobacter sakazakii (strain ATCC BAA-894) (Enterobacter sakazakii).